Consider the following 431-residue polypeptide: Chorismate synthase 2, chloroplastic (431 aa).

The transit peptide at 1 to 48 (MASSMLTKQFLGAPFSSFGSGQQPSKLCSSNLRFPTHRSQPKRLEIQA) directs the protein to the chloroplast. The interval 93 to 141 (DRRRPGQSRITTPRKETDTCKISSGTADGLTTGSPIKVEVPNTDQRGND) is disordered. Positions 112-126 (CKISSGTADGLTTGS) are enriched in polar residues.

Belongs to the chorismate synthase family. As to quaternary structure, homotetramer. FMNH2 is required as a cofactor. In terms of tissue distribution, predominantly expressed in flowers and roots and, to a lesser extent, in stems, leaves, and cotyledons.

It localises to the plastid. The protein resides in the chloroplast. The catalysed reaction is 5-O-(1-carboxyvinyl)-3-phosphoshikimate = chorismate + phosphate. It functions in the pathway metabolic intermediate biosynthesis; chorismate biosynthesis; chorismate from D-erythrose 4-phosphate and phosphoenolpyruvate: step 7/7. Functionally, catalyzes the last common step of the biosynthesis of aromatic amino acids, produced via the shikimic acid pathway. The chain is Chorismate synthase 2, chloroplastic (CS2) from Solanum lycopersicum (Tomato).